Consider the following 344-residue polypeptide: Zinc metalloproteinase nas-6 (344 aa).

An N-terminal signal peptide occupies residues 1–19 (MLDHVLLLTYCLVSTVVRS). The 195-residue stretch at 72 to 266 (NALKNKQLTW…VKINKLYSCK (195 aa)) folds into the Peptidase M12A domain. 5 cysteine pairs are disulfide-bonded: Cys-114–Cys-265, Cys-135–Cys-154, Cys-300–Cys-334, Cys-307–Cys-327, and Cys-314–Cys-331. His-162 contributes to the Zn(2+) binding site. Glu-163 is a catalytic residue. Positions 166 and 172 each coordinate Zn(2+). The ShKT domain occupies 300 to 334 (CVDHFADCPHFAQYCTRASFFFVMKSYCPFTCKHC).

Requires Zn(2+) as cofactor. In terms of tissue distribution, expressed in pharyngeal and body wall muscles, intestine, hypodermis and pharyngeal mc2 cells.

It localises to the secreted. In terms of biological role, metalloprotease. This Caenorhabditis elegans protein is Zinc metalloproteinase nas-6 (nas-6).